Here is a 295-residue protein sequence, read N- to C-terminus: 4-diphosphocytidyl-2-C-methyl-D-erythritol kinase (295 aa).

Residue Lys22 is part of the active site. Residue 106 to 116 (PAGGGFGGGSS) coordinates ATP. The active site involves Asp148.

It belongs to the GHMP kinase family. IspE subfamily.

The catalysed reaction is 4-CDP-2-C-methyl-D-erythritol + ATP = 4-CDP-2-C-methyl-D-erythritol 2-phosphate + ADP + H(+). It participates in isoprenoid biosynthesis; isopentenyl diphosphate biosynthesis via DXP pathway; isopentenyl diphosphate from 1-deoxy-D-xylulose 5-phosphate: step 3/6. In terms of biological role, catalyzes the phosphorylation of the position 2 hydroxy group of 4-diphosphocytidyl-2C-methyl-D-erythritol. The protein is 4-diphosphocytidyl-2-C-methyl-D-erythritol kinase of Xanthomonas axonopodis pv. citri (strain 306).